Reading from the N-terminus, the 156-residue chain is Hydrogenase 3 maturation protease (156 aa).

Ni(2+)-binding residues include D16, D62, and H90.

The protein belongs to the peptidase A31 family. As to quaternary structure, monomer.

The catalysed reaction is This enzyme specifically removes a 32-amino acid peptide from the C-terminus of the precursor of the large subunit of E.coli hydrogenase 3 by cleavage at the C-terminal side of Arg-537.. Its function is as follows. Protease involved in the C-terminal processing of HycE, the large subunit of hydrogenase 3. This is Hydrogenase 3 maturation protease (hycI) from Escherichia coli O157:H7.